The primary structure comprises 125 residues: MRALGRHVLAEVYGCSFEILNDIKKVEEIMVKAALEAGAEIREVCFHKFSPQGVSGVVVISESHLAIHTWPELGYAAVDVFTCGERVNPWDACRYLTEKFKAADVHATEIERGVIEPPQAAAVNL.

S63 functions as the Schiff-base intermediate with substrate; via pyruvic acid in the catalytic mechanism. Residue S63 is modified to Pyruvic acid (Ser); by autocatalysis. The Proton acceptor; for processing activity role is filled by H68. The Proton donor; for catalytic activity role is filled by C83.

Belongs to the prokaryotic AdoMetDC family. Type 1 subfamily. Heterotetramer of two alpha and two beta chains arranged as a dimer of alpha/beta heterodimers. The cofactor is pyruvate. Is synthesized initially as an inactive proenzyme. Formation of the active enzyme involves a self-maturation process in which the active site pyruvoyl group is generated from an internal serine residue via an autocatalytic post-translational modification. Two non-identical subunits are generated from the proenzyme in this reaction, and the pyruvate is formed at the N-terminus of the alpha chain, which is derived from the carboxyl end of the proenzyme. The post-translation cleavage follows an unusual pathway, termed non-hydrolytic serinolysis, in which the side chain hydroxyl group of the serine supplies its oxygen atom to form the C-terminus of the beta chain, while the remainder of the serine residue undergoes an oxidative deamination to produce ammonia and the pyruvoyl group blocking the N-terminus of the alpha chain.

It carries out the reaction S-adenosyl-L-methionine + H(+) = S-adenosyl 3-(methylsulfanyl)propylamine + CO2. The protein operates within amine and polyamine biosynthesis; S-adenosylmethioninamine biosynthesis; S-adenosylmethioninamine from S-adenosyl-L-methionine: step 1/1. Functionally, catalyzes the decarboxylation of S-adenosylmethionine to S-adenosylmethioninamine (dcAdoMet), the propylamine donor required for the synthesis of the polyamines spermine and spermidine from the diamine putrescine. The protein is S-adenosylmethionine decarboxylase proenzyme of Moorella thermoacetica (strain ATCC 39073 / JCM 9320).